A 344-amino-acid chain; its full sequence is sn-glycerol-3-phosphate import ATP-binding protein UgpC 2 (344 aa).

In terms of domain architecture, ABC transporter spans 4 to 234 (IELIDLKKNY…PETVFVAGFI (231 aa)). Residue 36-43 (GPSGCGKS) participates in ATP binding.

This sequence belongs to the ABC transporter superfamily. sn-glycerol-3-phosphate importer (TC 3.A.1.1.3) family. In terms of assembly, the complex is composed of two ATP-binding proteins (UgpC), two transmembrane proteins (UgpA and UgpE) and a solute-binding protein (UgpB).

The protein localises to the cell inner membrane. The enzyme catalyses sn-glycerol 3-phosphate(out) + ATP + H2O = sn-glycerol 3-phosphate(in) + ADP + phosphate + H(+). In terms of biological role, part of the ABC transporter complex UgpBAEC involved in sn-glycerol-3-phosphate (G3P) import. Responsible for energy coupling to the transport system. The protein is sn-glycerol-3-phosphate import ATP-binding protein UgpC 2 of Rhizobium johnstonii (strain DSM 114642 / LMG 32736 / 3841) (Rhizobium leguminosarum bv. viciae).